A 422-amino-acid polypeptide reads, in one-letter code: GTPase Obg (422 aa).

The region spanning 4–161 is the Obg domain; that stretch reads LHFVDEAFNE…FKIKTELKVL (158 aa). The 166-residue stretch at 162–327 folds into the OBG-type G domain; the sequence is ADIGLLGFPS…LKYEMSSLLQ (166 aa). GTP is bound by residues 168–175, 193–197, 214–217, 281–284, and 308–310; these read GFPSVGKS, FTTIK, DLPG, NKMD, and SLV. Serine 175 and threonine 195 together coordinate Mg(2+). Residues 345 to 422 form the OCT domain; it reads TLPDNQNTIS…KICDRLFYFL (78 aa).

This sequence belongs to the TRAFAC class OBG-HflX-like GTPase superfamily. OBG GTPase family. In terms of assembly, monomer. It depends on Mg(2+) as a cofactor.

Its subcellular location is the cytoplasm. Functionally, an essential GTPase which binds GTP, GDP and possibly (p)ppGpp with moderate affinity, with high nucleotide exchange rates and a fairly low GTP hydrolysis rate. Plays a role in control of the cell cycle, stress response, ribosome biogenesis and in those bacteria that undergo differentiation, in morphogenesis control. This chain is GTPase Obg, found in Onion yellows phytoplasma (strain OY-M).